Here is a 502-residue protein sequence, read N- to C-terminus: Polyadenylate-binding protein, cytoplasmic and nuclear (502 aa).

RRM domains are found at residues 14 to 90 (LTIY…KKDE), 96 to 176 (GNIF…LYNP), 191 to 275 (TNCF…KGQR), and 299 to 376 (KNLY…YFKN).

This sequence belongs to the polyadenylate-binding protein type-1 family.

It is found in the cytoplasm. The protein resides in the nucleus. Binds the poly(A) tail of mRNA. Appears to be an important mediator of the multiple roles of the poly(A) tail in mRNA biogenesis, stability and translation. In Encephalitozoon cuniculi (strain GB-M1) (Microsporidian parasite), this protein is Polyadenylate-binding protein, cytoplasmic and nuclear (PAB1).